A 310-amino-acid polypeptide reads, in one-letter code: Urease accessory protein UreD (310 aa).

This sequence belongs to the UreD family. UreD, UreF and UreG form a complex that acts as a GTP-hydrolysis-dependent molecular chaperone, activating the urease apoprotein by helping to assemble the nickel containing metallocenter of UreC. The UreE protein probably delivers the nickel.

The protein resides in the cytoplasm. Functionally, required for maturation of urease via the functional incorporation of the urease nickel metallocenter. This chain is Urease accessory protein UreD, found in Synechococcus sp. (strain RCC307).